Consider the following 531-residue polypeptide: Peptide chain release factor 3 (531 aa).

One can recognise a tr-type G domain in the interval 10–278; that stretch reads RRRRTFAIIS…SLIDWAPAPK (269 aa). Residues 19 to 26, 87 to 91, and 141 to 144 contribute to the GTP site; these read SHPDAGKT, DTPGH, and NKYD.

This sequence belongs to the TRAFAC class translation factor GTPase superfamily. Classic translation factor GTPase family. PrfC subfamily.

The protein resides in the cytoplasm. Its function is as follows. Increases the formation of ribosomal termination complexes and stimulates activities of RF-1 and RF-2. It binds guanine nucleotides and has strong preference for UGA stop codons. It may interact directly with the ribosome. The stimulation of RF-1 and RF-2 is significantly reduced by GTP and GDP, but not by GMP. This is Peptide chain release factor 3 from Neisseria gonorrhoeae (strain NCCP11945).